We begin with the raw amino-acid sequence, 365 residues long: tRNA/tmRNA (uracil-C(5))-methyltransferase (365 aa).

S-adenosyl-L-methionine is bound by residues glutamine 189, tyrosine 217, asparagine 222, glutamate 238, and aspartate 298. The active-site Nucleophile is the cysteine 323. The active-site Proton acceptor is the glutamate 357.

It belongs to the class I-like SAM-binding methyltransferase superfamily. RNA M5U methyltransferase family. TrmA subfamily.

The enzyme catalyses uridine(54) in tRNA + S-adenosyl-L-methionine = 5-methyluridine(54) in tRNA + S-adenosyl-L-homocysteine + H(+). The catalysed reaction is uridine(341) in tmRNA + S-adenosyl-L-methionine = 5-methyluridine(341) in tmRNA + S-adenosyl-L-homocysteine + H(+). In terms of biological role, dual-specificity methyltransferase that catalyzes the formation of 5-methyluridine at position 54 (m5U54) in all tRNAs, and that of position 341 (m5U341) in tmRNA (transfer-mRNA). This is tRNA/tmRNA (uracil-C(5))-methyltransferase from Shewanella sp. (strain ANA-3).